A 365-amino-acid chain; its full sequence is Chorismate synthase (365 aa).

Arg-47 serves as a coordination point for NADP(+). FMN is bound by residues 124–126 (RAS), Gly-287, 302–306 (KPTAT), and Arg-328.

It belongs to the chorismate synthase family. As to quaternary structure, homotetramer. FMNH2 serves as cofactor.

It carries out the reaction 5-O-(1-carboxyvinyl)-3-phosphoshikimate = chorismate + phosphate. Its pathway is metabolic intermediate biosynthesis; chorismate biosynthesis; chorismate from D-erythrose 4-phosphate and phosphoenolpyruvate: step 7/7. Catalyzes the anti-1,4-elimination of the C-3 phosphate and the C-6 proR hydrogen from 5-enolpyruvylshikimate-3-phosphate (EPSP) to yield chorismate, which is the branch point compound that serves as the starting substrate for the three terminal pathways of aromatic amino acid biosynthesis. This reaction introduces a second double bond into the aromatic ring system. This is Chorismate synthase from Prochlorococcus marinus (strain MIT 9215).